The chain runs to 95 residues: uncharacterized protein (95 aa).

This is an uncharacterized protein from Homo sapiens (Human).